The primary structure comprises 518 residues: DNA-binding protein Ikaros (518 aa).

Residues methionine 1–arginine 51 form a disordered region. Residues leucine 37–valine 47 show a composition bias toward polar residues. 4 consecutive C2H2-type zinc fingers follow at residues leucine 117 to histidine 139, phenylalanine 145 to histidine 167, phenylalanine 173 to histidine 195, and histidine 201 to histidine 224. The disordered stretch occupies residues serine 381–glutamate 405. 2 C2H2-type zinc fingers span residues tyrosine 461–histidine 483 and phenylalanine 489–histidine 513.

The protein belongs to the Ikaros C2H2-type zinc-finger protein family. Expressed in embryonic hematopoietic organs such as the bursa of Fabricius, thymus and spleen. In the adult, expressed in spleen, thymus, bursa and peripheral blood leukocytes.

It is found in the nucleus. Its function is as follows. Binds and activates the enhancer (delta-A element) of the CD3-delta gene. Functions in the specification and the maturation of the T-lymphocyte. Also interacts with a critical control element in the TDT (terminal deoxynucleotidyltransferase) promoter as well as with the promoters for other genes expressed during early stages of B- and T-cell development. Function is isoform-specific and is modulated by dominant-negative inactive isoforms. This Gallus gallus (Chicken) protein is DNA-binding protein Ikaros (IKZF1).